Here is a 253-residue protein sequence, read N- to C-terminus: Phycoerythrobilin:ferredoxin oxidoreductase (253 aa).

The protein belongs to the HY2 family.

It catalyses the reaction (3Z)-phycoerythrobilin + oxidized 2[4Fe-4S]-[ferredoxin] = 15,16-dihydrobiliverdin + reduced 2[4Fe-4S]-[ferredoxin] + 2 H(+). In terms of biological role, catalyzes the two-electron reduction of the C2 and C3(1) diene system of 15,16-dihydrobiliverdin. This chain is Phycoerythrobilin:ferredoxin oxidoreductase, found in Prochlorococcus marinus (strain MIT 9301).